The chain runs to 241 residues: 2-C-methyl-D-erythritol 4-phosphate cytidylyltransferase (241 aa).

This sequence belongs to the IspD/TarI cytidylyltransferase family. IspD subfamily. As to quaternary structure, homodimer.

The catalysed reaction is 2-C-methyl-D-erythritol 4-phosphate + CTP + H(+) = 4-CDP-2-C-methyl-D-erythritol + diphosphate. Its pathway is isoprenoid biosynthesis; isopentenyl diphosphate biosynthesis via DXP pathway; isopentenyl diphosphate from 1-deoxy-D-xylulose 5-phosphate: step 2/6. Catalyzes the formation of 4-diphosphocytidyl-2-C-methyl-D-erythritol from CTP and 2-C-methyl-D-erythritol 4-phosphate (MEP). In Yersinia pseudotuberculosis serotype I (strain IP32953), this protein is 2-C-methyl-D-erythritol 4-phosphate cytidylyltransferase.